We begin with the raw amino-acid sequence, 356 residues long: Holliday junction branch migration complex subunit RuvB (356 aa).

The large ATPase domain (RuvB-L) stretch occupies residues 4 to 191 (TDKLATEQRI…FGIVARLEFY (188 aa)). Residues leucine 30, arginine 31, glycine 72, lysine 75, threonine 76, threonine 77, 138–140 (EDY), arginine 181, tyrosine 191, and arginine 228 each bind ATP. Position 76 (threonine 76) interacts with Mg(2+). The interval 192-262 (DAEQLSRIVR…VADAALAMLD (71 aa)) is small ATPAse domain (RuvB-S). Residues 265 to 356 (PVGFDLMDRK…RGEWDTPDGK (92 aa)) form a head domain (RuvB-H) region. Arginine 301, arginine 320, and arginine 325 together coordinate DNA.

The protein belongs to the RuvB family. Homohexamer. Forms an RuvA(8)-RuvB(12)-Holliday junction (HJ) complex. HJ DNA is sandwiched between 2 RuvA tetramers; dsDNA enters through RuvA and exits via RuvB. An RuvB hexamer assembles on each DNA strand where it exits the tetramer. Each RuvB hexamer is contacted by two RuvA subunits (via domain III) on 2 adjacent RuvB subunits; this complex drives branch migration. In the full resolvosome a probable DNA-RuvA(4)-RuvB(12)-RuvC(2) complex forms which resolves the HJ.

It is found in the cytoplasm. The catalysed reaction is ATP + H2O = ADP + phosphate + H(+). Functionally, the RuvA-RuvB-RuvC complex processes Holliday junction (HJ) DNA during genetic recombination and DNA repair, while the RuvA-RuvB complex plays an important role in the rescue of blocked DNA replication forks via replication fork reversal (RFR). RuvA specifically binds to HJ cruciform DNA, conferring on it an open structure. The RuvB hexamer acts as an ATP-dependent pump, pulling dsDNA into and through the RuvAB complex. RuvB forms 2 homohexamers on either side of HJ DNA bound by 1 or 2 RuvA tetramers; 4 subunits per hexamer contact DNA at a time. Coordinated motions by a converter formed by DNA-disengaged RuvB subunits stimulates ATP hydrolysis and nucleotide exchange. Immobilization of the converter enables RuvB to convert the ATP-contained energy into a lever motion, pulling 2 nucleotides of DNA out of the RuvA tetramer per ATP hydrolyzed, thus driving DNA branch migration. The RuvB motors rotate together with the DNA substrate, which together with the progressing nucleotide cycle form the mechanistic basis for DNA recombination by continuous HJ branch migration. Branch migration allows RuvC to scan DNA until it finds its consensus sequence, where it cleaves and resolves cruciform DNA. This is Holliday junction branch migration complex subunit RuvB from Burkholderia lata (strain ATCC 17760 / DSM 23089 / LMG 22485 / NCIMB 9086 / R18194 / 383).